Here is a 905-residue protein sequence, read N- to C-terminus: Nitrate reductase [NADPH] (905 aa).

The segment at 1–42 (METSTTTTLLQQERIPENSEPISTHIHTHSLPPTPPGTAKPS) is disordered. C179 serves as a coordination point for Mo-molybdopterin. Residues 546–621 (NRKITIEELK…LPTYHIGTLD (76 aa)) form the Cytochrome b5 heme-binding domain. Residues H581 and H604 each coordinate heme. An FAD-binding FR-type domain is found at 648–759 (KTWSKAILDK…KGPTGKFVYH (112 aa)). FAD contacts are provided by residues 702–705 (RSYT), 719–723 (LIKIY), 733–735 (VMT), S783, and T786. Position 875 to 884 (875 to 884 (LLLVCGPPPM)) interacts with NADP(+).

Belongs to the nitrate reductase family. In terms of assembly, homodimer. Requires FAD as cofactor. The cofactor is heme. It depends on Mo-molybdopterin as a cofactor.

It catalyses the reaction nitrite + NADP(+) + H2O = nitrate + NADPH + H(+). Nitrate reductase is a key enzyme involved in the first step of nitrate assimilation in plants, fungi and bacteria. This Fusarium oxysporum (Fusarium vascular wilt) protein is Nitrate reductase [NADPH] (NIA).